Consider the following 360-residue polypeptide: Phenylalanine--tRNA ligase alpha subunit (360 aa).

Residue glutamate 260 participates in Mg(2+) binding.

The protein belongs to the class-II aminoacyl-tRNA synthetase family. Phe-tRNA synthetase alpha subunit type 1 subfamily. As to quaternary structure, tetramer of two alpha and two beta subunits. Mg(2+) is required as a cofactor.

Its subcellular location is the cytoplasm. The catalysed reaction is tRNA(Phe) + L-phenylalanine + ATP = L-phenylalanyl-tRNA(Phe) + AMP + diphosphate + H(+). The polypeptide is Phenylalanine--tRNA ligase alpha subunit (Methylobacterium nodulans (strain LMG 21967 / CNCM I-2342 / ORS 2060)).